Reading from the N-terminus, the 301-residue chain is Protease HtpX (301 aa).

A run of 2 helical transmembrane segments spans residues 4–24 and 38–58; these read IGLF…ILSL and LGNL…ISLL. His-147 lines the Zn(2+) pocket. Glu-148 is a catalytic residue. His-151 contacts Zn(2+). The next 2 helical transmembrane spans lie at 155 to 175 and 200 to 220; these read GDMV…MFFA and FAIT…IVMW. Glu-226 serves as a coordination point for Zn(2+).

It belongs to the peptidase M48B family. Zn(2+) is required as a cofactor.

It localises to the cell inner membrane. This Acinetobacter baylyi (strain ATCC 33305 / BD413 / ADP1) protein is Protease HtpX.